The chain runs to 72 residues: ATP synthase subunit L (72 aa).

In terms of assembly, F-type ATP synthases have 2 components, the catalytic core F(1) and the membrane-embedded component F(0), linked together by a central stalk and a peripheral stalk. The central stalk, also called rotor shaft, is often seen as part of F(1). The peripheral stalk is seen as part of F(0). F(0) contains the membrane channel next to the rotor. F-type ATP synthases form dimers but each monomer functions independently in ATP generation. The dimer consists of 18 different polypeptides: ATP1 (subunit alpha, part of F(1), 3 molecules per monomer), ATP2 (subunit beta, part of F(1), 3 molecules per monomer), ATP3 (subunit gamma, part of the central stalk), ATP4 (subunit b, part of the peripheral stalk), ATP5/OSCP (subunit 5/OSCP, part of the peripheral stalk), ATP6 (subunit a, part of the peripheral stalk), ATP7 (subunit d, part of the peripheral stalk), ATP8 (subunit 8, part of the peripheral stalk), OLI1 (subunit c, part of the rotor, 10 molecules per monomer), ATP14 (subunit h, part of the peripheral stalk), ATP15 (subunit epsilon, part of the central stalk), ATP16 (subunit delta, part of the central stalk), ATP17 (subunit f, part of the peripheral stalk), ATP18 (subunit i/j, part of the peripheral stalk). Dimer-specific subunits are ATP19 (subunit k, at interface between monomers), ATP20 (subunit g, at interface between monomers), TIM11 (subunit e, at interface between monomers). Also contains subunit L.

The protein localises to the mitochondrion inner membrane. Functionally, mitochondrial membrane ATP synthase (F(1)F(0) ATP synthase or Complex V) produces ATP from ADP in the presence of a proton gradient across the membrane which is generated by electron transport complexes of the respiratory chain. F-type ATP synthases consist of two structural domains, F(1) - containing the extramembraneous catalytic core, and F(0) - containing the membrane proton channel, linked together by a central stalk and a peripheral stalk. During catalysis, ATP synthesis in the catalytic domain of F(1) is coupled via a rotary mechanism of the central stalk subunits to proton translocation. The chain is ATP synthase subunit L from Pichia angusta (Yeast).